The chain runs to 87 residues: Small ribosomal subunit protein bS20 (87 aa).

Residues 1–28 are disordered; sequence MANIKSQQKRNRTNERARLRNKSVKSSL.

Belongs to the bacterial ribosomal protein bS20 family.

In terms of biological role, binds directly to 16S ribosomal RNA. In Mycobacterium marinum (strain ATCC BAA-535 / M), this protein is Small ribosomal subunit protein bS20.